Here is a 486-residue protein sequence, read N- to C-terminus: CUGBP Elav-like family member 4 (486 aa).

Residues methionine 1–glutamine 298 are sufficient for RNA-binding and MSE-dependent splicing activity. Over residues leucine 18–glycine 28 the composition is skewed to polar residues. 2 disordered regions span residues leucine 18 to serine 39 and leucine 121 to serine 149. The RRM 1 domain occupies isoleucine 54 to serine 135. Residues arginine 138–serine 149 show a composition bias toward polar residues. One can recognise an RRM 2 domain in the interval arginine 152–threonine 232. Residues arginine 239–phenylalanine 258 form a necessary for TNNT2 exon 5 inclusion region. In terms of domain architecture, RRM 3 spans proline 404–proline 479.

The protein belongs to the CELF/BRUNOL family. In terms of tissue distribution, ubiquitous. Strongly expressed in the cerebellum, hippocampus, amygdala, temporal and frontal cortex and frontal lobes.

It is found in the nucleus. Its subcellular location is the cytoplasm. Functionally, RNA-binding protein implicated in the regulation of pre-mRNA alternative splicing. Mediates exon inclusion and/or exclusion in pre-mRNA that are subject to tissue-specific and developmentally regulated alternative splicing. Specifically activates exon 5 inclusion of cardiac isoforms of TNNT2 during heart remodeling at the juvenile to adult transition. Promotes exclusion of both the smooth muscle (SM) and non-muscle (NM) exons in actinin pre-mRNAs. Activates the splicing of MAPT/Tau exon 10. Binds to muscle-specific splicing enhancer (MSE) intronic sites flanking the alternative exon 5 of TNNT2 pre-mRNA. The chain is CUGBP Elav-like family member 4 (CELF4) from Homo sapiens (Human).